Reading from the N-terminus, the 365-residue chain is MFEVNPVLNKLKELSERTELLRGYFDYDAKKERLEEVNAELEQPDVWNEPERAQALGKERVSLENVVGTIDVLTQGAEDVEMLVSLAVEGEDEDTFNEAVAEADVLETKLVDLEFRRMFSGQHDGSDCYIDIQSGSGGTEAQDWANMVLRMYLRWGDAHGYKPELIELSDGDVAGIKSATVKFTGEYAFGWLRTETGVHRLVRKSPFDSGGRRHTSFCSVFVYPEIDDDIDIEINPADLRIDVYRASGAGGQHVNRTESAVRITHIPTGVVVQCQNDRSQHKNKDQCMKQLKAKLYELEIQKQNAEKQALEETKSDIGWGSQIRSYVLDDARIKDLRTGVETRNTQAVLDGDLDKFIEASLKSGL.

Gln-252 bears the N5-methylglutamine mark.

It belongs to the prokaryotic/mitochondrial release factor family. Methylated by PrmC. Methylation increases the termination efficiency of RF2.

It is found in the cytoplasm. In terms of biological role, peptide chain release factor 2 directs the termination of translation in response to the peptide chain termination codons UGA and UAA. The sequence is that of Peptide chain release factor 2 from Aeromonas salmonicida (strain A449).